We begin with the raw amino-acid sequence, 310 residues long: Phosphoribosylaminoimidazole-succinocarboxamide synthase (310 aa).

Belongs to the SAICAR synthetase family.

The catalysed reaction is 5-amino-1-(5-phospho-D-ribosyl)imidazole-4-carboxylate + L-aspartate + ATP = (2S)-2-[5-amino-1-(5-phospho-beta-D-ribosyl)imidazole-4-carboxamido]succinate + ADP + phosphate + 2 H(+). The protein operates within purine metabolism; IMP biosynthesis via de novo pathway; 5-amino-1-(5-phospho-D-ribosyl)imidazole-4-carboxamide from 5-amino-1-(5-phospho-D-ribosyl)imidazole-4-carboxylate: step 1/2. The chain is Phosphoribosylaminoimidazole-succinocarboxamide synthase from Xanthomonas oryzae pv. oryzae (strain MAFF 311018).